The sequence spans 347 residues: Protein RecA (347 aa).

67 to 74 lines the ATP pocket; it reads GPESSGKT.

Belongs to the RecA family.

It is found in the cytoplasm. Its function is as follows. Can catalyze the hydrolysis of ATP in the presence of single-stranded DNA, the ATP-dependent uptake of single-stranded DNA by duplex DNA, and the ATP-dependent hybridization of homologous single-stranded DNAs. It interacts with LexA causing its activation and leading to its autocatalytic cleavage. This Helicobacter pylori (strain G27) protein is Protein RecA.